Here is a 282-residue protein sequence, read N- to C-terminus: NADPH-dependent 7-cyano-7-deazaguanine reductase (282 aa).

Ile-88 to Ser-90 lines the substrate pocket. Ser-90–Lys-91 is a binding site for NADPH. The active-site Thioimide intermediate is the Cys-190. Catalysis depends on Asp-197, which acts as the Proton donor. Substrate is bound at residue His-229–Glu-230. NADPH is bound at residue Arg-258–Gly-259.

This sequence belongs to the GTP cyclohydrolase I family. QueF type 2 subfamily. As to quaternary structure, homodimer.

It is found in the cytoplasm. The enzyme catalyses 7-aminomethyl-7-carbaguanine + 2 NADP(+) = 7-cyano-7-deazaguanine + 2 NADPH + 3 H(+). Its pathway is tRNA modification; tRNA-queuosine biosynthesis. In terms of biological role, catalyzes the NADPH-dependent reduction of 7-cyano-7-deazaguanine (preQ0) to 7-aminomethyl-7-deazaguanine (preQ1). The sequence is that of NADPH-dependent 7-cyano-7-deazaguanine reductase from Escherichia coli O139:H28 (strain E24377A / ETEC).